We begin with the raw amino-acid sequence, 357 residues long: Peptide chain release factor 1 (357 aa).

At Gln-236 the chain carries N5-methylglutamine.

It belongs to the prokaryotic/mitochondrial release factor family. Methylated by PrmC. Methylation increases the termination efficiency of RF1.

It localises to the cytoplasm. Peptide chain release factor 1 directs the termination of translation in response to the peptide chain termination codons UAG and UAA. The polypeptide is Peptide chain release factor 1 (prfA) (Mycobacterium bovis (strain ATCC BAA-935 / AF2122/97)).